A 494-amino-acid polypeptide reads, in one-letter code: Sugiol synthase (494 aa).

Residues 3–23 traverse the membrane as a helical segment; the sequence is SFSLLAALFFISAATWFISSR. Heme is bound at residue cysteine 437.

It belongs to the cytochrome P450 family. It depends on heme as a cofactor. Expressed in roots.

It localises to the membrane. The catalysed reaction is ferruginol + 2 reduced [NADPH--hemoprotein reductase] + 2 O2 = sugiol + 2 oxidized [NADPH--hemoprotein reductase] + 3 H2O + 2 H(+). It catalyses the reaction ferruginol + reduced [NADPH--hemoprotein reductase] + O2 = 11-hydroxyferruginol + oxidized [NADPH--hemoprotein reductase] + H2O + H(+). The enzyme catalyses 11-hydroxyferruginol + 2 reduced [NADPH--hemoprotein reductase] + 2 O2 = 11-hydroxysugiol + 2 oxidized [NADPH--hemoprotein reductase] + 3 H2O + 2 H(+). It participates in secondary metabolite biosynthesis; terpenoid biosynthesis. In terms of biological role, monooxygenase that oxidizes ferruginol to produce sugiol. Oxidizes ferruginol at C-12 to produce 11-hydroxyferruginol. Can oxidize 11-hydroxyferruginol to 11-hydroxysugiol. These products are intermediates in tanshinone biosynthesis. The sequence is that of Sugiol synthase from Salvia miltiorrhiza (Chinese sage).